A 162-amino-acid polypeptide reads, in one-letter code: uncharacterized protein (162 aa).

A run of 3 helical transmembrane segments spans residues 28-50 (ALAL…VCFF), 57-76 (LLLL…DPWL), and 108-130 (YNTM…YALA).

The protein resides in the cell membrane. This is an uncharacterized protein from Treponema pallidum (strain Nichols).